The following is a 429-amino-acid chain: Cell wall protein ECM33 (429 aa).

An N-terminal signal peptide occupies residues 1–19; the sequence is MQFKNALTATAILSASALA. 12 N-linked (GlcNAc...) asparagine glycosylation sites follow: N21, N56, N82, N196, N209, N227, N234, N241, N267, N279, N304, and N328. The residue at position 339 (S339) is a Phosphoserine. The span at 361-401 shows a compositional bias: low complexity; that stretch reads LSSTSTESSKSSATSSASSSGDASNAQASVSASASSSSSSS. A disordered region spans residues 361–410; that stretch reads LSSTSTESSKSSATSSASSSGDASNAQASVSASASSSSSSSKKSKGAAPE. Residue G406 is the site of GPI-anchor amidated glycine attachment. A propeptide spans 407-429 (removed in mature form); that stretch reads AAPELVPATSFMGVVAAVAVALL.

The protein belongs to the SPS2 family. Post-translationally, the GPI-anchor is attached to the protein in the endoplasmic reticulum and serves to target the protein to the cell surface. There, the glucosamine-inositol phospholipid moiety is cleaved off and the GPI-modified mannoprotein is covalently attached via its lipidless GPI glycan remnant to the 1,6-beta-glucan of the outer cell wall layer.

It is found in the cell membrane. Its subcellular location is the secreted. The protein resides in the cell wall. In terms of biological role, required for proper cell wall integrity and for the correct assembly of the mannoprotein outer layer of the cell wall. Important for apical bud growth. This chain is Cell wall protein ECM33 (ECM33), found in Saccharomyces cerevisiae (strain YJM789) (Baker's yeast).